A 275-amino-acid polypeptide reads, in one-letter code: Large ribosomal subunit protein uL2 (275 aa).

Residues 223 to 275 (VAMNPIDHPHGGGEGRTGEAREPVSPWGTPSKGYKTRRNKRTNNMIVQRRKRK) are disordered. The span at 229–244 (DHPHGGGEGRTGEARE) shows a compositional bias: basic and acidic residues.

Belongs to the universal ribosomal protein uL2 family. In terms of assembly, part of the 50S ribosomal subunit. Forms a bridge to the 30S subunit in the 70S ribosome.

In terms of biological role, one of the primary rRNA binding proteins. Required for association of the 30S and 50S subunits to form the 70S ribosome, for tRNA binding and peptide bond formation. It has been suggested to have peptidyltransferase activity; this is somewhat controversial. Makes several contacts with the 16S rRNA in the 70S ribosome. The chain is Large ribosomal subunit protein uL2 from Bordetella avium (strain 197N).